The chain runs to 429 residues: MIKLRDELGTATTDSAQKILLLGSGELGKEIAIEAQRLGVEVVAVDRYANAPAMQVAHRSYVGNMMDKDFLWSVVEREKPDAIIPEIEAINLDALFEFEKEGYFVVPNAKATWIAMHRERLRETLVKEAKVPTSRYMYATTLDELYEACEKIGYPCHTKAIMSSSGKGSYFVRGPEDIPKAWEEAKTKARGSAEKIIVEEHIDFDVEITELAVRHFDENGEIVTTFPKPVGHYQIDGDYHASWQPAEISEKAEREVYRIAKRITDVLGGLGLFGVEMFVKGDKVWANEVSPRPHDTGMVTLASHPPGFSEFGLHLRAVLGLPIPGEWVDGYRLFPMLIPAATHVIKAKVSGYSPRFRGLAKALSVPNATIRLFGKPEAYPGRRLGVVLAWDKDVQEAKKRAEMVAHMIELRTRSSDWHSQDYEKRKHLL.

N(1)-(5-phospho-beta-D-ribosyl)glycinamide contacts are provided by residues 26-27 and glutamate 86; that span reads EL. ATP is bound by residues arginine 118, lysine 159, 199–202, and glutamate 207; that span reads EEHI. The 197-residue stretch at 123–319 folds into the ATP-grasp domain; the sequence is ETLVKEAKVP…EFGLHLRAVL (197 aa). The Mg(2+) site is built by glutamate 276 and glutamate 288. N(1)-(5-phospho-beta-D-ribosyl)glycinamide-binding positions include aspartate 295, lysine 375, and 382–383; that span reads RR.

The protein belongs to the PurK/PurT family. Homodimer.

The catalysed reaction is N(1)-(5-phospho-beta-D-ribosyl)glycinamide + formate + ATP = N(2)-formyl-N(1)-(5-phospho-beta-D-ribosyl)glycinamide + ADP + phosphate + H(+). It participates in purine metabolism; IMP biosynthesis via de novo pathway; N(2)-formyl-N(1)-(5-phospho-D-ribosyl)glycinamide from N(1)-(5-phospho-D-ribosyl)glycinamide (formate route): step 1/1. Involved in the de novo purine biosynthesis. Catalyzes the transfer of formate to 5-phospho-ribosyl-glycinamide (GAR), producing 5-phospho-ribosyl-N-formylglycinamide (FGAR). Formate is provided by PurU via hydrolysis of 10-formyl-tetrahydrofolate. The sequence is that of Formate-dependent phosphoribosylglycinamide formyltransferase from Pyrococcus furiosus (strain ATCC 43587 / DSM 3638 / JCM 8422 / Vc1).